We begin with the raw amino-acid sequence, 342 residues long: Protein-ribulosamine 3-kinase, chloroplastic (342 aa).

The transit peptide at 1–46 (MANVALLSAASPSTSSAAPRLRHVARRRPSRRSACPRSAASRLSIM) directs the protein to the chloroplast. Residue 141–143 (EFI) coordinates ATP. The active-site Proton acceptor is the Asp246.

This sequence belongs to the fructosamine kinase family.

It localises to the plastid. Its subcellular location is the chloroplast. The enzyme catalyses N(6)-D-ribulosyl-L-lysyl-[protein] + ATP = N(6)-(3-O-phospho-D-ribulosyl)-L-lysyl-[protein] + ADP + H(+). It carries out the reaction N(6)-(D-erythrulosyl)-L-lysyl-[protein] + ATP = N(6)-(3-O-phospho-D-erythrulosyl)-L-lysyl-[protein] + ADP + H(+). In terms of biological role, initiates a process leading to the deglycation of proteins. Phosphorylates low-molecular-mass and protein-bound erythrulosamines and ribulosamines, but not fructosamines or psicosamines, on the third carbon of the sugar moiety. Protein-bound erythrulosamine 3-phosphates and ribulosamine 3-phosphates are unstable and decompose under physiological conditions. This is Protein-ribulosamine 3-kinase, chloroplastic from Oryza sativa subsp. japonica (Rice).